Here is a 320-residue protein sequence, read N- to C-terminus: Acetyl-coenzyme A carboxylase carboxyl transferase subunit alpha (320 aa).

Residues isoleucine 42 to aspartate 295 form the CoA carboxyltransferase C-terminal domain.

This sequence belongs to the AccA family. As to quaternary structure, acetyl-CoA carboxylase is a heterohexamer composed of biotin carboxyl carrier protein (AccB), biotin carboxylase (AccC) and two subunits each of ACCase subunit alpha (AccA) and ACCase subunit beta (AccD).

Its subcellular location is the cytoplasm. The catalysed reaction is N(6)-carboxybiotinyl-L-lysyl-[protein] + acetyl-CoA = N(6)-biotinyl-L-lysyl-[protein] + malonyl-CoA. It functions in the pathway lipid metabolism; malonyl-CoA biosynthesis; malonyl-CoA from acetyl-CoA: step 1/1. Its function is as follows. Component of the acetyl coenzyme A carboxylase (ACC) complex. First, biotin carboxylase catalyzes the carboxylation of biotin on its carrier protein (BCCP) and then the CO(2) group is transferred by the carboxyltransferase to acetyl-CoA to form malonyl-CoA. In Afipia carboxidovorans (strain ATCC 49405 / DSM 1227 / KCTC 32145 / OM5) (Oligotropha carboxidovorans), this protein is Acetyl-coenzyme A carboxylase carboxyl transferase subunit alpha.